Consider the following 212-residue polypeptide: Proteasome subunit beta (212 aa).

A propeptide spans 1–11 (MSQEHQDVKTG) (removed in mature form; by autocatalysis). Thr12 acts as the Nucleophile in catalysis.

It belongs to the peptidase T1B family. As to quaternary structure, the 20S proteasome core is composed of 14 alpha and 14 beta subunits that assemble into four stacked heptameric rings, resulting in a barrel-shaped structure. The two inner rings, each composed of seven catalytic beta subunits, are sandwiched by two outer rings, each composed of seven alpha subunits. The catalytic chamber with the active sites is on the inside of the barrel. Has a gated structure, the ends of the cylinder being occluded by the N-termini of the alpha-subunits. Is capped at one or both ends by the proteasome regulatory ATPase, PAN.

The protein resides in the cytoplasm. It catalyses the reaction Cleavage of peptide bonds with very broad specificity.. With respect to regulation, the formation of the proteasomal ATPase PAN-20S proteasome complex, via the docking of the C-termini of PAN into the intersubunit pockets in the alpha-rings, triggers opening of the gate for substrate entry. Interconversion between the open-gate and close-gate conformations leads to a dynamic regulation of the 20S proteasome proteolysis activity. Its function is as follows. Component of the proteasome core, a large protease complex with broad specificity involved in protein degradation. This is Proteasome subunit beta from Methanocorpusculum labreanum (strain ATCC 43576 / DSM 4855 / Z).